The chain runs to 69 residues: Amphipathic peptide OcyC2 (69 aa).

Residues 1 to 23 (MKTQFAILMIAVVLMQMLVQTEG) form the signal peptide. I37 bears the Isoleucine amide mark. Residues 41 to 69 (GLKKLDQLDDTFDSDLSDADVKLLREMFK) constitute a propeptide that is removed on maturation.

This sequence belongs to the non-disulfide-bridged peptide (NDBP) superfamily. Short antimicrobial peptide (group 4) family. As to expression, expressed by the venom gland.

Its subcellular location is the secreted. It localises to the target cell membrane. Amphipathic peptide with antimicrobial activity. Shows antifungal activity with MIC values ranging from 25 to 200 uM. Does not show antifungal activity against Candida glabrata (ATCC90030) and Candida parapsilosis (ATCC22019) (MIC&gt;400 uM). This Opisthacanthus cayaporum (South American scorpion) protein is Amphipathic peptide OcyC2.